The following is a 279-amino-acid chain: Ribosomal RNA small subunit methyltransferase A (279 aa).

Positions 42, 67, 88, 113, and 129 each coordinate S-adenosyl-L-methionine.

Belongs to the class I-like SAM-binding methyltransferase superfamily. rRNA adenine N(6)-methyltransferase family. RsmA subfamily.

It is found in the cytoplasm. The enzyme catalyses adenosine(1518)/adenosine(1519) in 16S rRNA + 4 S-adenosyl-L-methionine = N(6)-dimethyladenosine(1518)/N(6)-dimethyladenosine(1519) in 16S rRNA + 4 S-adenosyl-L-homocysteine + 4 H(+). In terms of biological role, specifically dimethylates two adjacent adenosines (A1518 and A1519) in the loop of a conserved hairpin near the 3'-end of 16S rRNA in the 30S particle. May play a critical role in biogenesis of 30S subunits. The polypeptide is Ribosomal RNA small subunit methyltransferase A (Thermotoga maritima (strain ATCC 43589 / DSM 3109 / JCM 10099 / NBRC 100826 / MSB8)).